The sequence spans 792 residues: MQFSEHWLRSLVNPPLDSESLGHLLTMAGLEVEEAVPAAAAFSGVVVGRIIEAEKHPNADKLKLCKVDVGQDELLQIVCGAPNAAAGLRVPCAMVGAKLPGFDIKAAKLRGVESFGMLCSARELGLSDDHGGLLELPDNAPIGQDIRNFLALDDTLFTIKLTPNRSDCLSLAGVAREVAALTGQPFALPQIEAVVPAIDDRRPVVLDAPDGCPRYCSRIVRGVDAKAPTPDWMKQRLQRSGVRSISALVDVTNYVMLELGQPLHAFDNAKLVGAIHVRYPHAGEKVLLLNEQTVVPAADTLLIADEARALALAGIMGGEDSGITLDTVDVFLESAFFAPAAIAGRARSYGFVSDASHRFERGVDFELPARAIERATRLILDICGGTAGPADETVAKDHLPERPAVRLRPARARRLLGIDLGDDAIVRLLEGVHLSVEREGDALLVTPPSFRFDIEIEEDLIEEVARLHGYDAIPACAPQGSLMMLDRSESGRSAWDVRHLLAARDFQEVVNYAFVEEAWERDFCANAEPIRLANPIASQMSVMRSSLIPGLAANLVANRKRQQARVRVFEIGRCFERKADGEPVAGFQQPLRVAGLAAGLALPEQWGAASRQVDFYDVKSDVEALFAPRALGFERLSDPALHPGRAASILLDGRRIGLLGEIHPVWVQRYEMGTAPVVFEIELDAALLADLPAYREISRQPAVTRDVALVVEQALTAARVIEVMQEAAPTIVMGMELFDIYHGKGIDPGKKSLAFRVLMQDTQRTLEDAEVDAAVEAIVRHTETSLGARLRG.

In terms of domain architecture, tRNA-binding spans Ala39–Arg147. A B5 domain is found at Pro400–Ala475. Mg(2+) is bound by residues Asp453, Asp459, Glu462, and Glu463. The FDX-ACB domain maps to Ser698–Arg791.

It belongs to the phenylalanyl-tRNA synthetase beta subunit family. Type 1 subfamily. Tetramer of two alpha and two beta subunits. Mg(2+) serves as cofactor.

The protein localises to the cytoplasm. The catalysed reaction is tRNA(Phe) + L-phenylalanine + ATP = L-phenylalanyl-tRNA(Phe) + AMP + diphosphate + H(+). This Aromatoleum aromaticum (strain DSM 19018 / LMG 30748 / EbN1) (Azoarcus sp. (strain EbN1)) protein is Phenylalanine--tRNA ligase beta subunit.